Reading from the N-terminus, the 749-residue chain is Taperin (749 aa).

The segment at 144–348 (PAAPCRRGSP…IRPSSKPDME (205 aa)) is disordered. Composition is skewed to polar residues over residues 169-179 (SAATRTPTNRS), 230-239 (LQKTGSNSFT), and 250-266 (VNRS…SPTG). Position 274 is a phosphoserine (Ser-274). Residues 323 to 335 (QRQWVSSATSAND) are compositionally biased toward polar residues. Basic and acidic residues predominate over residues 337-347 (FEIRPSSKPDM). Phosphoserine occurs at positions 401, 457, and 501. Disordered stretches follow at residues 502–586 (EEEA…TTLE), 636–673 (FEYP…SEKP), and 730–749 (LTPA…ALYF). Polar residues-rich tracts occupy residues 534–544 (ELLNRGSNTFT) and 558–570 (HLSQ…QQGA). The span at 647-668 (EEAEEEEEEEGEEDGEEEEVGP) shows a compositional bias: acidic residues.

The protein belongs to the taperin family. In terms of assembly, interacts with GRXCR2; the interaction restricts TPRN to the stereocilum basal region. Interacts with actin ACTB; the interaction may stabilize stereocilia. Interacts with CLIC5. Interacts with PTPRQ. TPRN, CLIC5 and PTPQR form concentric rings at the base of stereocilia and may form a complex. Interacts with phosphatase PPP1CA; the interaction results in inhibition of PPP1CA phosphatase activity. Interacts with DNA damage response proteins XRCC6/KU70, XRCC5/KU80, PARP1, TOP1 and TOP2A; these interactions recruit TPRN to sites of DNA damage where it may play a role in DNA repair. In the organ of Corti, expressed in the inner ear hair cell stereocilia and the supporting cells (at protein level). Expressed in the sensory epithelia of the organ of Corti and vestibular end organs and, to a lesser extent, in Reisner's membrane and the spiral ligament (at protein level). At postnatal day 2, expression is detected in cochlea, liver, brain, kidney, heart and lung.

It is found in the cell projection. The protein resides in the stereocilium. It localises to the microvillus. Its subcellular location is the nucleus. The protein localises to the nucleoplasm. It is found in the cytoplasm. In terms of biological role, essential for hearing. Required for maintenance of stereocilia on both inner and outer hair cells. Necessary for the integrity of the stereociliary rootlet. May act as an actin cytoskeleton regulator involved in the regulation of actin dynamics at the pointed end in hair cells. Forms rings at the base of stereocilia and binds actin filaments in the stereocilia which may stabilize the stereocilia. Acts as a strong inhibitor of PPP1CA phosphatase activity. Recruited to sites of DNA damage and may play a role in DNA damage repair. This is Taperin (Tprn) from Mus musculus (Mouse).